The following is a 75-amino-acid chain: Small ribosomal subunit protein bS18 (75 aa).

Belongs to the bacterial ribosomal protein bS18 family. In terms of assembly, part of the 30S ribosomal subunit. Forms a tight heterodimer with protein bS6.

Its function is as follows. Binds as a heterodimer with protein bS6 to the central domain of the 16S rRNA, where it helps stabilize the platform of the 30S subunit. The chain is Small ribosomal subunit protein bS18 from Cereibacter sphaeroides (strain KD131 / KCTC 12085) (Rhodobacter sphaeroides).